Consider the following 402-residue polypeptide: Acyl-[acyl-carrier-protein] desaturase 3, chloroplastic (402 aa).

The transit peptide at 1-32 (MSLTGCLPPRPPCSMRRRTSGGGASVSPVVAM) directs the protein to the chloroplast. Residues 1-66 (MSLTGCLPPR…EVPPQVTHTL (66 aa)) form a disordered region. Positions 139, 178, 181, 231, 264, and 267 each coordinate Fe cation.

The protein belongs to the fatty acid desaturase type 2 family. In terms of assembly, homodimer. Fe(2+) is required as a cofactor.

The protein localises to the plastid. Its subcellular location is the chloroplast. It functions in the pathway lipid metabolism; fatty acid metabolism. Introduces a cis double bond in the acyl chain of an acyl-[acyl-carrier protein]. The sequence is that of Acyl-[acyl-carrier-protein] desaturase 3, chloroplastic from Oryza sativa subsp. japonica (Rice).